The primary structure comprises 122 residues: T-cell receptor beta chain V region C5 (122 aa).

The signal sequence occupies residues 1 to 7; sequence ILLCAKH. Residues 8–103 form a v segment region; that stretch reads MEAAVTQSPR…TAVYFCASSG (96 aa). Cys31 and Cys99 are disulfide-bonded. Residues 104–108 are d segment; the sequence is TGGAL. The tract at residues 109–122 is j segment; the sequence is DTQYFGPGTRLLVL.

The chain is T-cell receptor beta chain V region C5 from Mus musculus (Mouse).